The chain runs to 324 residues: MSTDQYRRVVVITGLSGAGKSTILRALEDAGYETVDNPPLPLVHDLVARGEGPLAFAVDARSRGFTADGLALAMERMRQLPGVRADLVFVRADTAALLSRYTETRHRHPLASGVGVRDGIRAEEILTASLVDVADLVVDTTDLPVTRLRAMIAERYGPEETGQGMVVSLISFAYPKGLPREADLVLDARFLRNPHYDPTLKPRTGQDRDVAAYIEADPDYATFHDRIDALLRLLLPRFVQEGKKYATIAIGCTGGRHRSVHLVEKLGEELRAQGWSVLRTHRELGISDDAPQAGAARVSTDDRNGRPEEHGSAQAPDELSRTTS.

Glycine 14 to serine 21 contributes to the ATP binding site. Aspartate 59 to serine 62 lines the GTP pocket. A disordered region spans residues isoleucine 286–serine 324. The segment covering serine 299 to glycine 311 has biased composition (basic and acidic residues).

This sequence belongs to the RapZ-like family.

Displays ATPase and GTPase activities. The protein is Nucleotide-binding protein GbCGDNIH1_0395 of Granulibacter bethesdensis (strain ATCC BAA-1260 / CGDNIH1).